A 135-amino-acid chain; its full sequence is UPF0299 membrane protein Spro_1570 (135 aa).

4 consecutive transmembrane segments (helical) span residues 4-24 (LFTL…CLFA), 30-50 (ALLP…FALL), 63-83 (GCHL…VGVM), and 93-113 (LGPL…VVGY).

This sequence belongs to the UPF0299 family.

It is found in the cell inner membrane. In Serratia proteamaculans (strain 568), this protein is UPF0299 membrane protein Spro_1570.